The chain runs to 618 residues: Leucine aminopeptidase 2 (618 aa).

A peptide-binding positions include 140 to 142 (QCQ) and 272 to 277 (PYGGME). His-301 is a Zn(2+) binding site. The Proton acceptor role is filled by Glu-302. Positions 305 and 324 each coordinate Zn(2+). Tyr-389 functions as the Proton donor in the catalytic mechanism.

This sequence belongs to the peptidase M1 family. Zn(2+) serves as cofactor.

The protein resides in the cytoplasm. Its subcellular location is the nucleus. It carries out the reaction an epoxide + H2O = an ethanediol. Its function is as follows. Aminopeptidase that preferentially cleaves di- and tripeptides. Also has low epoxide hydrolase activity (in vitro). Can hydrolyze the epoxide leukotriene LTA(4) but it forms preferentially 5,6-dihydroxy-7,9,11,14-eicosatetraenoic acid rather than the cytokine leukotriene B(4) as the product compared to the homologous mammalian enzyme (in vitro). This is Leucine aminopeptidase 2 from Emericella nidulans (strain FGSC A4 / ATCC 38163 / CBS 112.46 / NRRL 194 / M139) (Aspergillus nidulans).